The primary structure comprises 680 residues: WD repeat-containing protein 48 homolog (680 aa).

WD repeat units lie at residues 26 to 65 (QHRN…SEKY), 71 to 110 (HHND…CMST), 113 to 152 (THRD…ALTA), 164 to 203 (GSKD…RIMK), 206 to 245 (GHTE…CVQT), 248 to 287 (VHKE…NKTL), 290 to 329 (EEQA…RCTL), and 350 to 389 (KGGA…KKEQ). Residues 592-616 (ETTPSGGNANNSLQNSQSDANSEGS) form a disordered region.

This sequence belongs to the WD repeat WDR48 family. In terms of assembly, catalytic component of the Usp12-46 deubiquitylase complex consisting of Usp12-46, Wdr20 and Uaf1; regulatory subunit that, together wtih Wdr20, stabilizes Usp12-46. The Usp12-46 deubiquitylase complex associates with arr/arrow; the interaction leads to deubiquitination and stabilization of arr/arrow.

Its function is as follows. Regulatory component of the Usp12-46 deubiquitylase complex. activates deubiquitination by increasing the catalytic turnover without increasing the affinity of deubiquitinating enzymes for the substrate. The complex deubiquitylates the wg/wingless-signaling receptor arr/arrow, which stabilizes the receptor and increases its concentration at the cell surface; this enhances the sensitivity of cells to wg/wingless-signal stimulation. This increases the amplitude and spatial range of the signaling response to the wg/wingless morphogen gradient, facilitating the precise concentration-dependent regulation of its target genes. Together with Wdr20 and Usp12-46 required for wg/wingless-mediated signaling in the wing imaginal disc and for wg/wingless-dependent regulation of intestinal stem cell proliferation. The chain is WD repeat-containing protein 48 homolog from Drosophila sechellia (Fruit fly).